We begin with the raw amino-acid sequence, 366 residues long: MITLQRTPLFDVYAKYGGKTIDFGGWELPVQFSSIKEEHEAVRTAAGLFDVSHMGEVEVTGADSLAFLQRVVTNDVSTLKVGGAQYTAMCYENGGTVDDLLIYKRGEEDYLLVINASNIEKDYEWLASHVIGDTKVVNVSNEIAQLAIQGPKAEGILQKVVSEDLKEIKFFKFKNDVLVDGIPALVSRTGYTGEDGFEIYCKSEDAIKIWEKLLEVGEEDSLKPCGLGARDTLRFEATLPLYGQELSKDITPIEAGIGFAVKTNKEADFFGKEVLKEYKENGAPRKLVGIEVIERGIPRTHYPVYVGEEKIGEVTSGTQSPTLKKSIGLALIDVKYAAIDTEVEIEIRKKRVKAVVVPTPFYKRSK.

It belongs to the GcvT family. In terms of assembly, the glycine cleavage system is composed of four proteins: P, T, L and H.

It carries out the reaction N(6)-[(R)-S(8)-aminomethyldihydrolipoyl]-L-lysyl-[protein] + (6S)-5,6,7,8-tetrahydrofolate = N(6)-[(R)-dihydrolipoyl]-L-lysyl-[protein] + (6R)-5,10-methylene-5,6,7,8-tetrahydrofolate + NH4(+). Its function is as follows. The glycine cleavage system catalyzes the degradation of glycine. This chain is Aminomethyltransferase, found in Bacillus cytotoxicus (strain DSM 22905 / CIP 110041 / 391-98 / NVH 391-98).